A 577-amino-acid chain; its full sequence is Glycine--tRNA ligase (577 aa).

2 residues coordinate substrate: Arg-98 and Glu-164. ATP contacts are provided by residues 196–198 (RNE), 206–211 (IRLREF), 328–329 (EC), and 451–454 (GIDR). 211 to 215 (FTQAE) contacts substrate. 447–451 (EPSYG) is a substrate binding site.

Belongs to the class-II aminoacyl-tRNA synthetase family.

It is found in the cytoplasm. It catalyses the reaction tRNA(Gly) + glycine + ATP = glycyl-tRNA(Gly) + AMP + diphosphate. In terms of biological role, catalyzes the attachment of glycine to tRNA(Gly). In Methanocaldococcus jannaschii (strain ATCC 43067 / DSM 2661 / JAL-1 / JCM 10045 / NBRC 100440) (Methanococcus jannaschii), this protein is Glycine--tRNA ligase.